The sequence spans 1102 residues: Ubiquitin carboxyl-terminal hydrolase 7 (1102 aa).

The segment covering 1 to 10 (MNHQQQQQQQ) has biased composition (low complexity). The tract at residues 1–38 (MNHQQQQQQQKAGEQQLSEPEDMEMEAGDTDDPPRITQ) is disordered. The interval 1-208 (MNHQQQQQQQ…APHGVAWDSK (208 aa)) is interaction with TSPYL5. S18 is modified (phosphoserine). Residues 19-31 (EPEDMEMEAGDTD) are compositionally biased toward acidic residues. Position 49 is a phosphoserine (S49). An interaction with p53/TP53, MDM2 and EBNA1 region spans residues 53-208 (NTAEEDMEDD…APHGVAWDSK (156 aa)). In terms of domain architecture, MATH spans 68-195 (EATFQFTVER…DDKVTFEVFV (128 aa)). The segment at 70-205 (TFQFTVERFS…QADAPHGVAW (136 aa)) is necessary for nuclear localization. The region spanning 214 to 521 (VGLKNQGATC…NAYMLVYIRE (308 aa)) is the USP domain. C223 (nucleophile) is an active-site residue. Catalysis depends on H464, which acts as the Proton acceptor. An interaction with ICP0/VMW110 region spans residues 622-801 (LWPMQARSNG…HRVDVIFCDK (180 aa)). An N6-acetyllysine; alternate modification is found at K869. A Glycyl lysine isopeptide (Lys-Gly) (interchain with G-Cter in SUMO2); alternate cross-link involves residue K869. Residue K869 forms a Glycyl lysine isopeptide (Lys-Gly) (interchain with G-Cter in ubiquitin); alternate linkage. K882 participates in a covalent cross-link: Glycyl lysine isopeptide (Lys-Gly) (interchain with G-Cter in SUMO2). Residue S963 is modified to Phosphoserine. Residues K1084 and K1096 each carry the N6-acetyllysine modification.

This sequence belongs to the peptidase C19 family. In terms of assembly, monomer. Homodimer. Part of a complex with DAXX, MDM2, RASSF1 and USP7. Part of a complex with DAXX, MDM2 and USP7. Interacts with MDM2; the interaction is independent of p53/TP53. Interacts with DAXX; the interaction is direct and independent of MDM2 and p53/TP53. Component of a complex composed of KMT2E/MLL5 (isoform 3), OGT (isoform 1) and USP7; the complex stabilizes KMT2E/MLL5, preventing KMT2E/MLL5 ubiquitination and proteasomal-mediated degradation. Interacts (via MATH domain) with KMT2E/MLL5 isoform 3. Interacts with OGT isoform 1. Interacts with FOXO4; the interaction is enhanced in presence of hydrogen peroxide and occurs independently of p53/TP53. Interacts with p53/TP53; the interaction is enhanced in response to DNA damage. Interacts with TSPYL5; this impairs interaction with p53/TP53. Interacts with PTEN; the interaction is direct. Interacts with ATXN1 and the strength of interaction is influenced by the length of the poly-Gln region in ATXN1. A weaker interaction seen with mutants having longer poly-Gln regions. Interacts with KIAA1530/UVSSA. Interacts with ABRAXAS2; the interaction is direct. Identified in a complex with TP53/p53 and ABRAXAS2. Interacts with MEX3C and antagonizes its ability to degrade mRNA. Interacts with DNMT1 and UHRF1. Interacts with FOXP3. Interacts (via MATH domain) with RNF220. Associated component of the Polycomb group (PcG) multiprotein PRC1-like complex. Interacts with EPOP. Interacts with OTUD4 and USP9X; the interaction is direct. Interacts with CRY2. Interacts with REST. Interacts with ERCC6. Part of a complex consisting of USP7, MAGEL2 and TRIM27; directly interacts with MAGEL2; directly interacts with TRIM27. As to quaternary structure, (Microbial infection) Isoform 1 and isoform 2 interact with herpesvirus 1 trans-acting transcriptional protein ICP0/VMW110. Binding to ICP0/VMW110 may modulate the substrate specificity or activity of USP7 to stabilize viral proteins. (Microbial infection) Interacts with Epstein-Barr virus EBNA1; the interaction is independent and simultaneous to EBNA1 interaction with USP7 as well as necessary for PML nuclear bodies disruption by EBNA1. EBNA1, USP7 and CSNK2B form a ternary complex. EBNA1 shows a 10-fold higher affinity than p53/TP53 and can compete with it for USP7 binding. In terms of assembly, (Microbial infection) Interacts with human cytomegalovirus proteins UL35 and UL35A; these interactions inhibit the ability of USP7 to form nuclear bodies. As to quaternary structure, (Microbial infection) Interacts with herpes virus 8/HHV-8 proteins vIRF-1 and vIRF-3; these interactions may disrupt TP53 signaling pathway during viral infection by decreasing the availability of USP7 for deubiquitinating and stabilizing TP53. (Microbial infection) Interacts with herpes virus 8/HHV-8 protein vIRF-2; this interaction modulates antiviral signaling via disruption of USP7 interactions with innate immune signaling proteins TRAF3 and TRAF6 thus affecting their ubiquitination. Post-translationally, isoform 1: Phosphorylated. Isoform 1 is phosphorylated at positions Ser-18 and Ser-963. Isoform 2: Not phosphorylated. Isoform 1: Polyneddylated. Isoform 2: Not Polyneddylated. In terms of processing, isoform 1 and isoform 2: Not sumoylated. Post-translationally, isoform 1 and isoform 2: Polyubiquitinated by herpesvirus 1 trans-acting transcriptional protein ICP0/VMW110; leading to its subsequent proteasomal degradation. Isoform 1: Ubiquitinated at Lys-869. In terms of tissue distribution, expressed in neural progenitor cells (at protein level). Widely expressed. Overexpressed in prostate cancer.

It localises to the nucleus. Its subcellular location is the cytoplasm. The protein resides in the PML body. It is found in the chromosome. The catalysed reaction is Thiol-dependent hydrolysis of ester, thioester, amide, peptide and isopeptide bonds formed by the C-terminal Gly of ubiquitin (a 76-residue protein attached to proteins as an intracellular targeting signal).. Inhibited by N-ethyl-maleimide (NEM) and divalent cations. Tolerates high concentrations of NaCl but is inhibited at concentrations of 195 mM and higher. In terms of biological role, hydrolase that deubiquitinates target proteins such as ARMC5, FOXO4, DEPTOR, KAT5, p53/TP53, MDM2, ERCC6, DNMT1, UHRF1, PTEN, KMT2E/MLL5 and DAXX. Together with DAXX, prevents MDM2 self-ubiquitination and enhances the E3 ligase activity of MDM2 towards p53/TP53, thereby promoting p53/TP53 ubiquitination and proteasomal degradation. Deubiquitinates p53/TP53, preventing degradation of p53/TP53, and enhances p53/TP53-dependent transcription regulation, cell growth repression and apoptosis. Deubiquitinates p53/TP53 and MDM2 and strongly stabilizes p53/TP53 even in the presence of excess MDM2, and also induces p53/TP53-dependent cell growth repression and apoptosis. Deubiquitination of FOXO4 in presence of hydrogen peroxide is not dependent on p53/TP53 and inhibits FOXO4-induced transcriptional activity. In association with DAXX, is involved in the deubiquitination and translocation of PTEN from the nucleus to the cytoplasm, both processes that are counteracted by PML. Deubiquitinates KMT2E/MLL5 preventing KMT2E/MLL5 proteasomal-mediated degradation. Involved in cell proliferation during early embryonic development. Involved in transcription-coupled nucleotide excision repair (TC-NER) in response to UV damage: recruited to DNA damage sites following interaction with KIAA1530/UVSSA and promotes deubiquitination of ERCC6, preventing UV-induced degradation of ERCC6. Involved in maintenance of DNA methylation via its interaction with UHRF1 and DNMT1: acts by mediating deubiquitination of UHRF1 and DNMT1, preventing their degradation and promoting DNA methylation by DNMT1. Deubiquitinates alkylation repair enzyme ALKBH3. OTUD4 recruits USP7 and USP9X to stabilize ALKBH3, thereby promoting the repair of alkylated DNA lesions. Acts as a chromatin regulator via its association with the Polycomb group (PcG) multiprotein PRC1-like complex; may act by deubiquitinating components of the PRC1-like complex. Able to mediate deubiquitination of histone H2B; it is however unsure whether this activity takes place in vivo. Exhibits a preference towards 'Lys-48'-linked ubiquitin chains. Increases regulatory T-cells (Treg) suppressive capacity by deubiquitinating and stabilizing the transcription factor FOXP3 which is crucial for Treg cell function. Plays a role in the maintenance of the circadian clock periodicity via deubiquitination and stabilization of the CRY1 and CRY2 proteins. Deubiquitinates REST, thereby stabilizing REST and promoting the maintenance of neural progenitor cells. Deubiquitinates SIRT7, inhibiting SIRT7 histone deacetylase activity and regulating gluconeogenesis. Involved in the regulation of WASH-dependent actin polymerization at the surface of endosomes and the regulation of endosomal protein recycling. It maintains optimal WASH complex activity and precise F-actin levels via deubiquitination of TRIM27 and WASHC1. Mediates the deubiquitination of phosphorylated DEPTOR, promoting its stability and leading to decreased mTORC1 signaling. Functionally, (Microbial infection) Contributes to the overall stabilization and trans-activation capability of the herpesvirus 1 trans-acting transcriptional protein ICP0/VMW110 during HSV-1 infection. Its function is as follows. (Microbial infection) Upon infection with Epstein-Barr virus, the interaction with viral EBNA1 increases the association of USP7 with PML proteins, which is required for the polyubiquitylation and degradation of PML. The polypeptide is Ubiquitin carboxyl-terminal hydrolase 7 (Homo sapiens (Human)).